The following is a 585-amino-acid chain: Zinc finger protein Eos (585 aa).

Disordered regions lie at residues 1 to 43 (MHTP…PDFL) and 68 to 98 (EKEF…SANS). Residues 25–34 (QGKDNLERDP) show a composition bias toward basic and acidic residues. The span at 79–98 (SVSTPNSQHSSPSRSLSANS) shows a compositional bias: polar residues. Residue Lys-100 forms a Glycyl lysine isopeptide (Lys-Gly) (interchain with G-Cter in SUMO2) linkage. Ser-105 carries the phosphoserine modification. C2H2-type zinc fingers lie at residues 159-181 (LKCD…KRSH), 187-209 (FHCN…IKLH), 215-237 (FKCP…LRTH), and 248-271 (YKCN…ERCH). Positions 281-585 (AQALAGQPGD…HIVRGEHKVG (305 aa)) are interaction with FOXP3. Lys-335 is modified (N6-acetyllysine). A disordered region spans residues 410-489 (PGRLELPGSR…QPPPTIVVGR (80 aa)). The CTBP-binding motif PEDLA motif lies at 425–429 (PEDLA). A compositionally biased stretch (pro residues) spans 475–484 (QGPPPQPPPT). Residue Lys-500 forms a Glycyl lysine isopeptide (Lys-Gly) (interchain with G-Cter in SUMO2) linkage. C2H2-type zinc fingers lie at residues 530–552 (FKCE…MGCH) and 558–582 (FECN…RGEH).

It belongs to the Ikaros C2H2-type zinc-finger protein family. In terms of assembly, self-associates. Interacts with other family members; IKZF1, IKZF2, IKZF3 and IKZF5. Interacts with CTBP2. Interacts with SPI1, MITF, FOXP3 and CTBP1. Highly expressed in skeletal muscle, low levels of expression in heart, thymus, kidney, liver, and spleen. Expressed in the hematopoietic cell lines MOLT-4, NALM-6 and K-562. Highly expressed in THP-1 and M-07e cell lines, which have characteristics of myeloid and early megakaryocytic cells respectively.

The protein resides in the nucleus. Its function is as follows. DNA-binding protein that binds to the 5'GGGAATRCC-3' Ikaros-binding sequence. Transcriptional repressor. Interacts with SPI1 and MITF to repress transcription of the CTSK and ACP5 promoters via recruitment of corepressors SIN3A and CTBP2. May be involved in the development of central and peripheral nervous systems. Essential for the inhibitory function of regulatory T-cells (Treg). Mediates FOXP3-mediated gene silencing in regulatory T-cells (Treg) via recruitment of corepressor CTBP1. In Homo sapiens (Human), this protein is Zinc finger protein Eos (IKZF4).